Reading from the N-terminus, the 66-residue chain is Large ribosomal subunit protein bL31 (66 aa).

The Zn(2+) site is built by Cys-16, Cys-18, Cys-36, and Cys-39.

Belongs to the bacterial ribosomal protein bL31 family. Type A subfamily. In terms of assembly, part of the 50S ribosomal subunit. Zn(2+) is required as a cofactor.

In terms of biological role, binds the 23S rRNA. The polypeptide is Large ribosomal subunit protein bL31 (Pelobacter propionicus (strain DSM 2379 / NBRC 103807 / OttBd1)).